The sequence spans 545 residues: Methionine--tRNA ligase (545 aa).

The 'HIGH' region signature appears at 10–20 (PYANGSLHIGH). Residues C141, C144, C153, and C156 each coordinate Zn(2+). The 'KMSKS' region signature appears at 329–333 (KISTS). T332 contributes to the ATP binding site.

This sequence belongs to the class-I aminoacyl-tRNA synthetase family. MetG type 1 subfamily. Monomer. It depends on Zn(2+) as a cofactor.

It localises to the cytoplasm. The catalysed reaction is tRNA(Met) + L-methionine + ATP = L-methionyl-tRNA(Met) + AMP + diphosphate. Its function is as follows. Is required not only for elongation of protein synthesis but also for the initiation of all mRNA translation through initiator tRNA(fMet) aminoacylation. In Streptococcus pneumoniae (strain 70585), this protein is Methionine--tRNA ligase.